A 162-amino-acid polypeptide reads, in one-letter code: NADH-quinone oxidoreductase subunit I (162 aa).

4Fe-4S ferredoxin-type domains are found at residues Leu52–Gly82 and Thr93–Asn122. [4Fe-4S] cluster-binding residues include Cys62, Cys65, Cys68, Cys72, Cys102, Cys105, Cys108, and Cys112.

It belongs to the complex I 23 kDa subunit family. In terms of assembly, NDH-1 is composed of 14 different subunits. Subunits NuoA, H, J, K, L, M, N constitute the membrane sector of the complex. [4Fe-4S] cluster serves as cofactor.

The protein localises to the cell inner membrane. The enzyme catalyses a quinone + NADH + 5 H(+)(in) = a quinol + NAD(+) + 4 H(+)(out). Its function is as follows. NDH-1 shuttles electrons from NADH, via FMN and iron-sulfur (Fe-S) centers, to quinones in the respiratory chain. The immediate electron acceptor for the enzyme in this species is believed to be ubiquinone. Couples the redox reaction to proton translocation (for every two electrons transferred, four hydrogen ions are translocated across the cytoplasmic membrane), and thus conserves the redox energy in a proton gradient. This Methylorubrum populi (strain ATCC BAA-705 / NCIMB 13946 / BJ001) (Methylobacterium populi) protein is NADH-quinone oxidoreductase subunit I.